A 174-amino-acid chain; its full sequence is Adenine phosphoribosyltransferase (174 aa).

The protein belongs to the purine/pyrimidine phosphoribosyltransferase family. Homodimer.

The protein resides in the cytoplasm. The enzyme catalyses AMP + diphosphate = 5-phospho-alpha-D-ribose 1-diphosphate + adenine. It functions in the pathway purine metabolism; AMP biosynthesis via salvage pathway; AMP from adenine: step 1/1. Functionally, catalyzes a salvage reaction resulting in the formation of AMP, that is energically less costly than de novo synthesis. The polypeptide is Adenine phosphoribosyltransferase (Photobacterium profundum (strain SS9)).